Here is a 54-residue protein sequence, read N- to C-terminus: Soricidin (54 aa).

Disulfide bonds link Cys-2-Cys-23, Cys-6-Cys-27, and Cys-9-Cys-41.

Belongs to the opioid neuropeptide precursor family. In terms of assembly, member of a multiprotein complex. In terms of tissue distribution, salivary gland.

Its subcellular location is the secreted. In terms of biological role, paralytic toxin that immobilizes a mealworm for 7 days. Inhibits the transient receptor potential cation channel subfamily V member 6 (TRPV6). The sequence is that of Soricidin from Blarina brevicauda (Northern short-tailed shrew).